The following is a 458-amino-acid chain: Smoothelin-like protein 2 (458 aa).

Positions 24–88 (LEGAVRALHE…RQVESLGLTT (65 aa)) form a coiled coil. Disordered stretches follow at residues 87–111 (TTGL…RAPR), 123–142 (FSLS…SELE), and 151–312 (IIEN…GAQA). The span at 94 to 104 (PGTPSPPPAPG) shows a compositional bias: pro residues. T96 is subject to Phosphothreonine. S98, S126, and S131 each carry phosphoserine. Residues 131-142 (SLDHHDEASELE) are compositionally biased toward basic and acidic residues. 2 stretches are compositionally biased toward low complexity: residues 158 to 167 (PGADPGDGPP) and 209 to 220 (TSATALSPTSAA). The segment covering 225-244 (LSSSPSEATTPWTPSPSEKN) has biased composition (polar residues). The span at 245 to 254 (SSLPRSLSSS) shows a compositional bias: low complexity. S252, S254, and S267 each carry phosphoserine. A compositionally biased stretch (pro residues) spans 270-283 (LVTPPQSPPSPQPP). At T272 the chain carries Phosphothreonine. S276 bears the Phosphoserine mark. Residues 290 to 299 (RPGERRRELV) are compositionally biased toward basic and acidic residues. The span at 300–310 (RSQTLPRTSGA) shows a compositional bias: polar residues. S341 is modified (phosphoserine). The Calponin-homology (CH) domain maps to 348–455 (SSIKQILLEW…YVQSLYNHLR (108 aa)).

Belongs to the smoothelin family.

The protein is Smoothelin-like protein 2 (SMTNL2) of Bos taurus (Bovine).